The following is a 106-amino-acid chain: Urease subunit beta (106 aa).

This sequence belongs to the urease beta subunit family. As to quaternary structure, heterotrimer of UreA (gamma), UreB (beta) and UreC (alpha) subunits. Three heterotrimers associate to form the active enzyme.

It localises to the cytoplasm. The enzyme catalyses urea + 2 H2O + H(+) = hydrogencarbonate + 2 NH4(+). It participates in nitrogen metabolism; urea degradation; CO(2) and NH(3) from urea (urease route): step 1/1. The chain is Urease subunit beta from Prochlorococcus marinus (strain AS9601).